We begin with the raw amino-acid sequence, 304 residues long: Retrotransposon Gag-like protein 4 (304 aa).

A CCHC-type zinc finger spans residues 276-293; sequence QLCVYCNQAGHFTRDCLA.

In terms of tissue distribution, in adults, expressed in brain, eye, kidney, ovary and testis. Weakly expressed in thymus, heart and muscle.

In terms of biological role, involved in cognitive function in the brain, possibly via the noradrenergic system. The sequence is that of Retrotransposon Gag-like protein 4 from Mus musculus (Mouse).